Reading from the N-terminus, the 283-residue chain is Bifunctional protein FolD (283 aa).

Residues 165–167 (GAS) and Ser190 each bind NADP(+).

This sequence belongs to the tetrahydrofolate dehydrogenase/cyclohydrolase family. As to quaternary structure, homodimer.

The enzyme catalyses (6R)-5,10-methylene-5,6,7,8-tetrahydrofolate + NADP(+) = (6R)-5,10-methenyltetrahydrofolate + NADPH. It catalyses the reaction (6R)-5,10-methenyltetrahydrofolate + H2O = (6R)-10-formyltetrahydrofolate + H(+). It participates in one-carbon metabolism; tetrahydrofolate interconversion. Its function is as follows. Catalyzes the oxidation of 5,10-methylenetetrahydrofolate to 5,10-methenyltetrahydrofolate and then the hydrolysis of 5,10-methenyltetrahydrofolate to 10-formyltetrahydrofolate. In Cupriavidus taiwanensis (strain DSM 17343 / BCRC 17206 / CCUG 44338 / CIP 107171 / LMG 19424 / R1) (Ralstonia taiwanensis (strain LMG 19424)), this protein is Bifunctional protein FolD.